The primary structure comprises 472 residues: 6-phosphogluconate dehydrogenase, decarboxylating (472 aa).

Residues 10 to 15, 33 to 35, 74 to 76, and Asn-102 each bind NADP(+); these read GMAVMG, NRT, and VQA. Substrate contacts are provided by residues Asn-102 and 128–130; that span reads SGG. The active-site Proton acceptor is Lys-184. 187-188 contributes to the substrate binding site; that stretch reads HN. The active-site Proton donor is Glu-191. Residues Tyr-192, Lys-262, Arg-289, Arg-447, and His-453 each coordinate substrate.

This sequence belongs to the 6-phosphogluconate dehydrogenase family. Homodimer.

It carries out the reaction 6-phospho-D-gluconate + NADP(+) = D-ribulose 5-phosphate + CO2 + NADPH. The protein operates within carbohydrate degradation; pentose phosphate pathway; D-ribulose 5-phosphate from D-glucose 6-phosphate (oxidative stage): step 3/3. Catalyzes the oxidative decarboxylation of 6-phosphogluconate to ribulose 5-phosphate and CO(2), with concomitant reduction of NADP to NADPH. In Lactococcus lactis subsp. lactis (strain IL1403) (Streptococcus lactis), this protein is 6-phosphogluconate dehydrogenase, decarboxylating (gnd).